We begin with the raw amino-acid sequence, 1015 residues long: DExH-box ATP-dependent RNA helicase DExH8 (1015 aa).

A Helicase ATP-binding domain is found at 36–197 (IDKILENRVT…FKELGRGERV (162 aa)). Position 49-56 (49-56 (GEPGCGKS)) interacts with ATP. The short motif at 144–147 (DEVH) is the DEVH box element. One can recognise a Helicase C-terminal domain in the interval 254-419 (LIHDLILYIH…KLSLRQQVLH (166 aa)). 2 C3H1-type zinc fingers span residues 727 to 753 (YGEA…THTL) and 754 to 782 (QSTR…HAMR).

The protein belongs to the DExH box helicase family.

It carries out the reaction ATP + H2O = ADP + phosphate + H(+). This Arabidopsis thaliana (Mouse-ear cress) protein is DExH-box ATP-dependent RNA helicase DExH8.